A 536-amino-acid chain; its full sequence is Thiamine transport system permease protein ThiP (536 aa).

12 consecutive transmembrane segments (helical) span residues 16 to 36, 58 to 78, 95 to 115, 134 to 154, 199 to 219, 240 to 260, 291 to 311, 334 to 354, 373 to 393, 404 to 424, 463 to 483, and 506 to 526; these read GLCA…ALWL, FSFW…VFLA, LCAM…LSVY, FSPY…LPMA, VAAL…SLGG, PARA…LVLL, DALL…AVVV, SLRI…MLLW, LSGM…FFLL, ADGI…LKVL, AQAL…VALF, and DGAV…TLIE. In terms of domain architecture, ABC transmembrane type-1 1 spans 56 to 261; the sequence is VRFSFWQAFL…VCCLALVLLS (206 aa). The region spanning 331-525 is the ABC transmembrane type-1 2 domain; the sequence is VWTSLRIALA…LLCFTLFTLI (195 aa).

It belongs to the binding-protein-dependent transport system permease family. The complex is composed of two ATP-binding proteins (ThiQ), two transmembrane proteins (ThiP) and a solute-binding protein (ThiB).

It is found in the cell inner membrane. Functionally, part of the ABC transporter complex ThiBPQ involved in thiamine import. Probably responsible for the translocation of the substrate across the membrane. Is also involved in thiamine pyrophosphate transport. The sequence is that of Thiamine transport system permease protein ThiP from Salmonella typhimurium (strain LT2 / SGSC1412 / ATCC 700720).